We begin with the raw amino-acid sequence, 81 residues long: GAMMA-ctenitoxin-Pn1a (81 aa).

Positions 1–16 are cleaved as a signal peptide; that stretch reads MKVAIVFLSLLVLAFA. A propeptide spanning residues 17 to 34 is cleaved from the precursor; the sequence is SESIEENREEFPVEESAR. Cystine bridges form between Cys-35/Cys-49, Cys-42/Cys-55, Cys-46/Cys-81, Cys-48/Cys-65, and Cys-57/Cys-63.

The protein belongs to the neurotoxin 03 (Tx2) family. 05 subfamily. As to expression, expressed by the venom gland.

The protein resides in the secreted. Its function is as follows. This insecticidal neurotoxin targets two types of channels/receptors. It reversibly inhibits the N-methyl-D-aspartate (NMDA)-subtype of ionotropic glutamate receptor (GRIN). It inhibits glutamate uptake from rat brain synaptosomes, and blocks GRIN in hippocampal slices. It also acts on sodium channels of both insects and mammals. On sodium channel insects, it strongly slows down channel inactivation (EC(50)=212.5 nM) and causes an increase (105%) in peak amplitude (at 1 uM) of B.germanica sodium channel (Nav), whereas it inhibits all mammalien sodium channels tested with the following order of potency: Nav1.3/SCN3A (IC(50)=1.5 uM) &gt; Nav1.6/SCN8A &gt; Nav1.5/SCN5A &gt; Nav1.4/SCN4A &gt;= Nav1.2/SCN2A. In vivo, it is highly toxic to house fly (Musca domestica), cockroach (Periplaneta americana), and cricket (Acheta domesticus). In different rat pain models (induced by PGE2, carrageenan or glutamate), it shows antinociceptive effect that may be related to an inhibitory activity on the glutamatergic system. The polypeptide is GAMMA-ctenitoxin-Pn1a (Phoneutria nigriventer (Brazilian armed spider)).